The sequence spans 213 residues: High frequency lysogenization protein HflD homolog (213 aa).

A coiled-coil region spans residues 79-126 (QGLNAELTRYTLSLMVLERKLSSAKGALDTLGNRINGLQRQLEHFDLQ).

Belongs to the HflD family.

It localises to the cytoplasm. The protein resides in the cell inner membrane. In Shigella boydii serotype 18 (strain CDC 3083-94 / BS512), this protein is High frequency lysogenization protein HflD homolog.